The following is a 238-amino-acid chain: Ribonuclease PH (238 aa).

Phosphate is bound by residues Arg-86 and 124-126 (GTR).

Belongs to the RNase PH family. As to quaternary structure, homohexameric ring arranged as a trimer of dimers.

The catalysed reaction is tRNA(n+1) + phosphate = tRNA(n) + a ribonucleoside 5'-diphosphate. Functionally, phosphorolytic 3'-5' exoribonuclease that plays an important role in tRNA 3'-end maturation. Removes nucleotide residues following the 3'-CCA terminus of tRNAs; can also add nucleotides to the ends of RNA molecules by using nucleoside diphosphates as substrates, but this may not be physiologically important. Probably plays a role in initiation of 16S rRNA degradation (leading to ribosome degradation) during starvation. This chain is Ribonuclease PH, found in Salmonella gallinarum (strain 287/91 / NCTC 13346).